Here is a 144-residue protein sequence, read N- to C-terminus: Ribosomal RNA large subunit methyltransferase H (144 aa).

Residues Leu-63, Gly-92, and 111–116 (LSAMTL) each bind S-adenosyl-L-methionine.

Belongs to the RNA methyltransferase RlmH family. In terms of assembly, homodimer.

It is found in the cytoplasm. It carries out the reaction pseudouridine(1915) in 23S rRNA + S-adenosyl-L-methionine = N(3)-methylpseudouridine(1915) in 23S rRNA + S-adenosyl-L-homocysteine + H(+). Specifically methylates the pseudouridine at position 1915 (m3Psi1915) in 23S rRNA. This Prochlorococcus marinus (strain MIT 9313) protein is Ribosomal RNA large subunit methyltransferase H.